The chain runs to 145 residues: MLFYITVTVLLVSAQAKFYTDCGSKLATVQSVGVSGWPENARECVLKRNSNVTISIDFSPTTDVSAITTEVHGVIMSLPVPFPCRSPDACKDNGLTCPIKAGVVANYKTTLPVLKSYPKVSVDVKWELKKDEEDLVCILIPARIH.

The signal sequence occupies residues 1–16 (MLFYITVTVLLVSAQA). 2 cysteine pairs are disulfide-bonded: cysteine 22-cysteine 137 and cysteine 90-cysteine 97. A glycan (N-linked (GlcNAc...) asparagine) is linked at asparagine 51.

The protein belongs to the NPC2 family.

Its subcellular location is the secreted. The polypeptide is Ecdysteroid-regulated 16 kDa protein (ESR16) (Manduca sexta (Tobacco hawkmoth)).